We begin with the raw amino-acid sequence, 408 residues long: tRNA-specific 2-thiouridylase MnmA (408 aa).

ATP-binding positions include 27–34 (AMSGGVDS) and L53. Catalysis depends on C121, which acts as the Nucleophile. Residues C121 and C222 are joined by a disulfide bond. An ATP-binding site is contributed by G145. An interaction with tRNA region spans residues 172-174 (RDQ). The Cysteine persulfide intermediate role is filled by C222.

Belongs to the MnmA/TRMU family.

It is found in the cytoplasm. It carries out the reaction S-sulfanyl-L-cysteinyl-[protein] + uridine(34) in tRNA + AH2 + ATP = 2-thiouridine(34) in tRNA + L-cysteinyl-[protein] + A + AMP + diphosphate + H(+). In terms of biological role, catalyzes the 2-thiolation of uridine at the wobble position (U34) of tRNA, leading to the formation of s(2)U34. The chain is tRNA-specific 2-thiouridylase MnmA from Rhizobium etli (strain ATCC 51251 / DSM 11541 / JCM 21823 / NBRC 15573 / CFN 42).